A 378-amino-acid chain; its full sequence is Histidine decarboxylase (378 aa).

Position 120 (histidine 120) interacts with substrate. At lysine 233 the chain carries N6-(pyridoxal phosphate)lysine. Residue serine 323 is part of the active site.

It belongs to the group II decarboxylase family. In terms of assembly, homotetramer. Pyridoxal 5'-phosphate is required as a cofactor.

The catalysed reaction is L-histidine + H(+) = histamine + CO2. The polypeptide is Histidine decarboxylase (hdc) (Morganella morganii (Proteus morganii)).